Reading from the N-terminus, the 127-residue chain is Small ribosomal subunit protein uS13 (127 aa).

Residues 97 to 127 (PVRGQRTKTNARTRKGPRKTVAGKKGVKDLR) form a disordered region. Residues 101–118 (QRTKTNARTRKGPRKTVA) are compositionally biased toward basic residues.

This sequence belongs to the universal ribosomal protein uS13 family. As to quaternary structure, part of the 30S ribosomal subunit. Forms a loose heterodimer with protein S19. Forms two bridges to the 50S subunit in the 70S ribosome.

In terms of biological role, located at the top of the head of the 30S subunit, it contacts several helices of the 16S rRNA. In the 70S ribosome it contacts the 23S rRNA (bridge B1a) and protein L5 of the 50S subunit (bridge B1b), connecting the 2 subunits; these bridges are implicated in subunit movement. Contacts the tRNAs in the A and P-sites. In Rhodopirellula baltica (strain DSM 10527 / NCIMB 13988 / SH1), this protein is Small ribosomal subunit protein uS13.